The chain runs to 388 residues: Succinate--CoA ligase [ADP-forming] subunit beta (388 aa).

In terms of domain architecture, ATP-grasp spans 9 to 245 (KELLAGYGLP…KSQENERELK (237 aa)). ATP is bound by residues Lys-46, 53–55 (GRG), Glu-100, Tyr-103, and Glu-108. Positions 200 and 214 each coordinate Mg(2+). Substrate is bound by residues Asn-265 and 322–324 (GIV).

This sequence belongs to the succinate/malate CoA ligase beta subunit family. As to quaternary structure, heterotetramer of two alpha and two beta subunits. It depends on Mg(2+) as a cofactor.

The catalysed reaction is succinate + ATP + CoA = succinyl-CoA + ADP + phosphate. It catalyses the reaction GTP + succinate + CoA = succinyl-CoA + GDP + phosphate. It participates in carbohydrate metabolism; tricarboxylic acid cycle; succinate from succinyl-CoA (ligase route): step 1/1. In terms of biological role, succinyl-CoA synthetase functions in the citric acid cycle (TCA), coupling the hydrolysis of succinyl-CoA to the synthesis of either ATP or GTP and thus represents the only step of substrate-level phosphorylation in the TCA. The beta subunit provides nucleotide specificity of the enzyme and binds the substrate succinate, while the binding sites for coenzyme A and phosphate are found in the alpha subunit. This Neisseria meningitidis serogroup C (strain 053442) protein is Succinate--CoA ligase [ADP-forming] subunit beta.